Consider the following 324-residue polypeptide: Polyprenol dehydrogenase (324 aa).

The active-site Proton acceptor is the tyrosine 206. NAD(+)-binding residues include tyrosine 206, lysine 210, and threonine 243.

The protein belongs to the short-chain dehydrogenases/reductases (SDR) family.

It localises to the lipid droplet. The enzyme catalyses a di-trans,poly-cis-polyprenol + NAD(+) = a di-trans,poly-cis-polyprenal + NADH + H(+). The catalysed reaction is a di-trans,poly-cis-polyprenol + NADP(+) = a di-trans,poly-cis-polyprenal + NADPH + H(+). It catalyses the reaction a di-trans,poly-cis-dolichol + NADP(+) = a di-trans,poly-cis-dolichal + NADPH + H(+). It carries out the reaction a di-trans,poly-cis-dolichol + NAD(+) = a di-trans,poly-cis-dolichal + NADH + H(+). It participates in protein modification; protein glycosylation. Oxidoreductase that plays a key role in early steps of protein N-linked glycosylation by mediating two non-consecutive steps in dolichol biosynthesis. Acts both as a NAD(+)-dependent dehydrogenase and as a NADPH-dependent reductase during the conversion of polyprenol into dolichol. First catalyzes the NAD(+)-dependent dehydrogenation of polyprenol into polyprenal; polyprenal is then reduced into dolichal by srd5a3. It then catalyzes the NADPH-dependent reduction of dolichal into dolichol. The protein is Polyprenol dehydrogenase of Danio rerio (Zebrafish).